A 360-amino-acid chain; its full sequence is CLIP domain-containing serine protease B4 (360 aa).

Positions 1–24 (MIGNRVINLLIVATLALAGQTVLA) are cleaved as a signal peptide. The Clip domain maps to 30 to 83 (DCVNPVGEAGKCVLFRECQPLVDIYNKPVNTPDDTQFLTESRCGLYERKTLVCC). 4 cysteine pairs are disulfide-bonded: Cys-31-Cys-82, Cys-41-Cys-72, Cys-47-Cys-83, and Cys-138-Cys-154. The 253-residue stretch at 108 to 360 (VIGGQPTKID…YVDWIKDNIY (253 aa)) folds into the Peptidase S1 domain. Residues His-153 and Asp-213 each act as charge relay system in the active site. Asn-224 is a glycosylation site (N-linked (GlcNAc...) asparagine). 2 disulfides stabilise this stretch: Cys-280–Cys-297 and Cys-307–Cys-336. The active-site Charge relay system is the Ser-311.

It belongs to the peptidase S1 family. CLIP subfamily. As to quaternary structure, interacts with SRPN2 in the hemolymph of immune-challenged female mosquitoes; the interaction results in CLIPB4 inhibition. In terms of tissue distribution, in females, expressed in fat body, cuticle, thorax and ovaries.

It is found in the secreted. Functionally, serine protease which plays a role in the innate immune response against protozoan and bacterial pathogens, such as Plasmodium bergei, Staphylococcus aureus, Micrococcus luteus and Escherichia coli, by activating the melanization cascade. Cleaves and activates CLIPB8. In the resistant strain L3-5, involved in the melanization of killed parasite P.berghei ookinetes which results in their clearance. In the susceptible strain G3, appears to be dispensable for ookinete elimination which occurs by lysis. The chain is CLIP domain-containing serine protease B4 from Anopheles gambiae (African malaria mosquito).